We begin with the raw amino-acid sequence, 108 residues long: Probable 4-amino-4-deoxy-L-arabinose-phosphoundecaprenol flippase subunit ArnE (108 aa).

3 consecutive transmembrane segments (helical) span residues 32-52 (PLLLWLGGSVLLLGMAMLVWL), 58-78 (VPVGVAYPMLSLNFIFVTLAA), and 85-105 (TLSLRHALGVILIVAGVAIMG). One can recognise an EamA domain in the interval 34-106 (LLWLGGSVLL…IVAGVAIMGS (73 aa)).

The protein belongs to the ArnE family. As to quaternary structure, heterodimer of ArnE and ArnF.

The protein resides in the cell inner membrane. It functions in the pathway bacterial outer membrane biogenesis; lipopolysaccharide biosynthesis. Translocates 4-amino-4-deoxy-L-arabinose-phosphoundecaprenol (alpha-L-Ara4N-phosphoundecaprenol) from the cytoplasmic to the periplasmic side of the inner membrane. The sequence is that of Probable 4-amino-4-deoxy-L-arabinose-phosphoundecaprenol flippase subunit ArnE from Erwinia tasmaniensis (strain DSM 17950 / CFBP 7177 / CIP 109463 / NCPPB 4357 / Et1/99).